Reading from the N-terminus, the 445-residue chain is MNKFAIIHMQKFQISDVQGIQKHNQRQGKSKSNLDIDYSKSEQNYDLLNQQKIRYESTIKQEISERVKRKPRANSVVLSEFVVTASPDYMHSLSLEEQKRYFESSLDFIQKRYGKQNTLYAMVHMDEATPHMHIGVMPITEDNRLSAKDMFTRKELISLQQDFPLEMREKGFDVDRGEGSEKKHLSPQAFKEKQDLEVEVEQLSNVKTHLKTKVVETHNQLQQTTNYIEKQNETLQKIQQQFLSLDKKIKEKKQEFETFRNQIPDKPVSMSYLREETKTEVTTKLFGKPEITEKKTGNIVVTREQWRDMTEKVNAAVIVKKDYERLQKTDLVKENQSLREDNKYLEETIKGNNLALKHSYKQNRELEEVNKELHTEIGTLKAHIRDLQMNIKVLYQQTKKVFKEQFKAFRGLIKNELDMKGVDNQFEREHTREIRSRQKGYDMER.

Residues Y45 and Y113 each coordinate DNA.

Belongs to the plasmid mobilization pre family.

The protein is Plasmid recombination enzyme of Bacillus thuringiensis.